The primary structure comprises 814 residues: ATP-dependent RNA helicase dbp-7 (814 aa).

The disordered stretch occupies residues 26-102 (GGRWRDRVKA…PPPPPTHAMK (77 aa)). 2 stretches are compositionally biased toward basic and acidic residues: residues 28-42 (RWRD…EKGG) and 69-78 (QRTEDGDSGR). Residues 145-174 (ENFLSLGLSRRVSQHLATKLEMKAPTAIQK) carry the Q motif motif. In terms of domain architecture, Helicase ATP-binding spans 178–384 (PQLVKEDSDA…EISLEDAVHI (207 aa)). An ATP-binding site is contributed by 191–198 (AETGSGKT). The DEAD box motif lies at 313–316 (DEGD). Positions 422–622 (RLVTLIALLK…GFATNINVPG (201 aa)) constitute a Helicase C-terminal domain. 3 disordered regions span residues 464 to 483 (TPRA…KPNI), 662 to 695 (ESKS…PLLV), and 741 to 795 (GIGG…AGRR). Positions 467 to 477 (AEPEPKPEGEA) are enriched in basic and acidic residues. Acidic residues predominate over residues 779–790 (DDDERDFGAADE).

The protein belongs to the DEAD box helicase family. DDX31/DBP7 subfamily.

It is found in the nucleus. Its subcellular location is the nucleolus. The enzyme catalyses ATP + H2O = ADP + phosphate + H(+). Functionally, ATP-binding RNA helicase involved in the biogenesis of 60S ribosomal subunits and is required for the normal formation of 25S and 5.8S rRNAs. The protein is ATP-dependent RNA helicase dbp-7 (dbp-7) of Neurospora crassa (strain ATCC 24698 / 74-OR23-1A / CBS 708.71 / DSM 1257 / FGSC 987).